Here is a 640-residue protein sequence, read N- to C-terminus: 1-deoxy-D-xylulose-5-phosphate synthase (640 aa).

Residues H72 and 113–115 contribute to the thiamine diphosphate site; that span reads GHA. D144 contacts Mg(2+). Residues 145 to 146, N174, Y287, and E370 each bind thiamine diphosphate; that span reads GA. Residue N174 coordinates Mg(2+).

It belongs to the transketolase family. DXPS subfamily. Homodimer. It depends on Mg(2+) as a cofactor. Thiamine diphosphate serves as cofactor.

It carries out the reaction D-glyceraldehyde 3-phosphate + pyruvate + H(+) = 1-deoxy-D-xylulose 5-phosphate + CO2. Its pathway is metabolic intermediate biosynthesis; 1-deoxy-D-xylulose 5-phosphate biosynthesis; 1-deoxy-D-xylulose 5-phosphate from D-glyceraldehyde 3-phosphate and pyruvate: step 1/1. Functionally, catalyzes the acyloin condensation reaction between C atoms 2 and 3 of pyruvate and glyceraldehyde 3-phosphate to yield 1-deoxy-D-xylulose-5-phosphate (DXP). In Synechocystis sp. (strain ATCC 27184 / PCC 6803 / Kazusa), this protein is 1-deoxy-D-xylulose-5-phosphate synthase.